Consider the following 210-residue polypeptide: Glycerol-3-phosphate acyltransferase (210 aa).

A run of 5 helical transmembrane segments spans residues 4–24, 52–72, 82–102, 118–138, and 159–179; these read LIVA…IVSA, AAIL…WLTG, DTSV…PVFF, LAIN…VAFF, and FLFG…LLIW.

This sequence belongs to the PlsY family. In terms of assembly, probably interacts with PlsX.

Its subcellular location is the cell inner membrane. It catalyses the reaction an acyl phosphate + sn-glycerol 3-phosphate = a 1-acyl-sn-glycero-3-phosphate + phosphate. It functions in the pathway lipid metabolism; phospholipid metabolism. Catalyzes the transfer of an acyl group from acyl-phosphate (acyl-PO(4)) to glycerol-3-phosphate (G3P) to form lysophosphatidic acid (LPA). This enzyme utilizes acyl-phosphate as fatty acyl donor, but not acyl-CoA or acyl-ACP. This chain is Glycerol-3-phosphate acyltransferase, found in Paraburkholderia phymatum (strain DSM 17167 / CIP 108236 / LMG 21445 / STM815) (Burkholderia phymatum).